A 307-amino-acid chain; its full sequence is Protein ORANGE, chloroplastic (307 aa).

The transit peptide at 1–55 (MSSLGRILSVSYPPDPYTWRFSQYKLSSSLGRNRRLRWRFTALDPESSSLDSESS) directs the protein to the chloroplast. Lys58 is covalently cross-linked (Glycyl lysine isopeptide (Lys-Gly) (interchain with G-Cter in ubiquitin)). Helical transmembrane passes span 146 to 166 (VYYATCFSLIAGIILFGGLLA) and 199 to 219 (IVASFSGGAVGVISALMVVEV). The tract at residues 208 to 299 (VGVISALMVV…CTGMAMASEH (92 aa)) is CR-type-like. The CXXCXGXG motif repeat unit spans residues 230–237 (CKYCLGTG). The CXXCXXXG motif repeat unit spans residues 241–248 (CARCSSTG). Residues 274–281 (CSNCSGAG) form a CXXCXGXG motif repeat. Residues 285 to 292 (CPTCLCTG) form a CXXCXXXG motif repeat.

Belongs to the orange-like family. As to quaternary structure, interacts with the phytoene synthase PSY1 in chloroplast. Binds to the eukaryotic release factor eRF1-2. Interacts with the transcription factor TCP14 in the nucleus to repress chloroplast biogenesis in etiolated seedlings. Associates to the E2 ubiquitin-conjugating enzyme UBC19. Post-translationally, ubiquitination at K-58 by UBC19 is essential for nuclear localization.

The protein resides in the plastid. The protein localises to the chloroplast membrane. Its subcellular location is the nucleus. It localises to the cytoplasm. Involved in chromoplast differentiation. Associated with a cellular process that triggers the differentiation of pro-plastids or other non-colored plastids into chromoplasts for carotenoid accumulation. Is associated with carotenoid accumulation in chromoplasts. Functions as a major regulator of the phytoene synthase PSY1 protein level and activity. Modulates carotenoid biosynthesis by means of post-transcriptional regulation of PSY1. Modulates carotenoid biosynthesis in part by up-regulating a series of endogenous carotenogenic genes. Regulates cell elongation in the petiole in an eRF1-2-dependent manner. Binds to and represses TCP14 transactivation activity, thus preventing early light-induced proteins (ELIPs, e.g. ELIP1 and ELIP2) expression and delaying chloroplast biogenesis (e.g. lower chlorophyll biosynthesis and slower development of thylakoid membranes) in germinating cotyledons and etiolated seedlings; reduced levels upon illumination combined to TCP14 accumulation derepress chloroplast biogenesis during deetiolation. The sequence is that of Protein ORANGE, chloroplastic from Arabidopsis thaliana (Mouse-ear cress).